We begin with the raw amino-acid sequence, 90 residues long: SAGA-associated factor 11 (90 aa).

The segment at 63 to 84 adopts an SGF11-type zinc-finger fold; that stretch reads FSCDNCGRKIAGGRFAQHINKC.

Belongs to the SGF11 family. Component of the 1.8 MDa SAGA transcription coactivator-HAT complex. SAGA is built of 5 distinct domains with specialized functions. Within the SAGA complex, SUS1, SGF11, SGF73 and UBP8 form an additional subcomplex of SAGA called the DUB module (deubiquitination module). Interacts directly with SGF73, SUS1 and UBP8.

It is found in the nucleus. In terms of biological role, functions as a component of the transcription regulatory histone acetylation (HAT) complex SAGA. At the promoters, SAGA is required for recruitment of the basal transcription machinery. It influences RNA polymerase II transcriptional activity through different activities such as TBP interaction and promoter selectivity, interaction with transcription activators, and chromatin modification through histone acetylation and deubiquitination. SAGA acetylates nucleosomal histone H3 to some extent (to form H3K9ac, H3K14ac, H3K18ac and H3K23ac). SAGA interacts with DNA via upstream activating sequences (UASs). Involved in transcriptional regulation of a subset of SAGA-regulated genes. Within the SAGA complex, participates in a subcomplex, that specifically deubiquitinates histones H2B. This chain is SAGA-associated factor 11, found in Lodderomyces elongisporus (strain ATCC 11503 / CBS 2605 / JCM 1781 / NBRC 1676 / NRRL YB-4239) (Yeast).